Consider the following 285-residue polypeptide: Eukaryotic translation initiation factor 3 subunit F-2 (285 aa).

The 135-residue stretch at 11 to 145 (VFLKPLVLFQ…TRLYCAVEMG (135 aa)) folds into the MPN domain.

The protein belongs to the eIF-3 subunit F family. Component of the eukaryotic translation initiation factor 3 (eIF-3) complex. The eIF-3 complex interacts with pix.

It localises to the cytoplasm. Component of the eukaryotic translation initiation factor 3 (eIF-3) complex, which is involved in protein synthesis of a specialized repertoire of mRNAs and, together with other initiation factors, stimulates binding of mRNA and methionyl-tRNAi to the 40S ribosome. The eIF-3 complex specifically targets and initiates translation of a subset of mRNAs involved in cell proliferation. The polypeptide is Eukaryotic translation initiation factor 3 subunit F-2 (Drosophila simulans (Fruit fly)).